The sequence spans 225 residues: tRNA (guanine-N(1)-)-methyltransferase (225 aa).

S-adenosyl-L-methionine is bound by residues G112 and 132–137 (IGDYVL).

Belongs to the RNA methyltransferase TrmD family. Homodimer.

It localises to the cytoplasm. The enzyme catalyses guanosine(37) in tRNA + S-adenosyl-L-methionine = N(1)-methylguanosine(37) in tRNA + S-adenosyl-L-homocysteine + H(+). Specifically methylates guanosine-37 in various tRNAs. This is tRNA (guanine-N(1)-)-methyltransferase from Porphyromonas gingivalis (strain ATCC BAA-308 / W83).